A 143-amino-acid polypeptide reads, in one-letter code: uncharacterized protein (143 aa).

Positions 24–78 constitute an HTH cro/C1-type domain; it reads IRQRREWQNMSQTTLGEAIGVTFQQVQKYEKGVNRVGAGRLQQISKALKVEPSYF. The segment at residues 35–54 is a DNA-binding region (H-T-H motif); it reads QTTLGEAIGVTFQQVQKYEK.

This is an uncharacterized protein from Sinorhizobium fredii (strain NBRC 101917 / NGR234).